A 58-amino-acid chain; its full sequence is ATP synthase F(0) complex subunit k, mitochondrial (58 aa).

N6-acetyllysine occurs at positions 16 and 17. A helical transmembrane segment spans residues 23 to 45; the sequence is TLTGRMNCVLATYGSIALIVLYF.

Component of the ATP synthase complex composed at least of ATP5F1A/subunit alpha, ATP5F1B/subunit beta, ATP5MC1/subunit c (homooctomer), MT-ATP6/subunit a, MT-ATP8/subunit 8, ATP5ME/subunit e, ATP5MF/subunit f, ATP5MG/subunit g, ATP5MK/subunit k, ATP5MJ/subunit j, ATP5F1C/subunit gamma, ATP5F1D/subunit delta, ATP5F1E/subunit epsilon, ATP5PF/subunit F6, ATP5PB/subunit b, ATP5PD/subunit d, ATP5PO/subunit OSCP. ATP synthase complex consists of a soluble F(1) head domain (subunits alpha(3) and beta(3)) - the catalytic core - and a membrane F(0) domain - the membrane proton channel (subunits c, a, 8, e, f, g, k and j). These two domains are linked by a central stalk (subunits gamma, delta, and epsilon) rotating inside the F1 region and a stationary peripheral stalk (subunits F6, b, d, and OSCP). The ATP synthase complex/complex V exists as a monomeric and a dimeric supercomplex that helps shape mitochondrial cristae to optimize proton flow.

The protein resides in the mitochondrion membrane. Its function is as follows. Subunit k, of the mitochondrial membrane ATP synthase complex (F(1)F(0) ATP synthase or Complex V) that produces ATP from ADP in the presence of a proton gradient across the membrane which is generated by electron transport complexes of the respiratory chain. ATP synthase complex consist of a soluble F(1) head domain - the catalytic core - and a membrane F(1) domain - the membrane proton channel. These two domains are linked by a central stalk rotating inside the F(1) region and a stationary peripheral stalk. During catalysis, ATP synthesis in the catalytic domain of F(1) is coupled via a rotary mechanism of the central stalk subunits to proton translocation. In vivo, can only synthesize ATP although its ATP hydrolase activity can be activated artificially in vitro. Part of the complex F(0) domain. Required for dimerization of the ATP synthase complex and as such regulates ATP synthesis in the mitochondria. This is ATP synthase F(0) complex subunit k, mitochondrial from Homo sapiens (Human).